The following is a 432-amino-acid chain: Enolase (432 aa).

Gln167 contacts (2R)-2-phosphoglycerate. Glu209 functions as the Proton donor in the catalytic mechanism. The Mg(2+) site is built by Asp246, Glu291, and Asp318. Residues Lys343, Arg372, Ser373, and Lys394 each coordinate (2R)-2-phosphoglycerate. The Proton acceptor role is filled by Lys343.

Belongs to the enolase family. As to quaternary structure, component of the RNA degradosome, a multiprotein complex involved in RNA processing and mRNA degradation. The cofactor is Mg(2+).

It is found in the cytoplasm. Its subcellular location is the secreted. The protein resides in the cell surface. The enzyme catalyses (2R)-2-phosphoglycerate = phosphoenolpyruvate + H2O. It participates in carbohydrate degradation; glycolysis; pyruvate from D-glyceraldehyde 3-phosphate: step 4/5. In terms of biological role, catalyzes the reversible conversion of 2-phosphoglycerate (2-PG) into phosphoenolpyruvate (PEP). It is essential for the degradation of carbohydrates via glycolysis. This Aliivibrio fischeri (strain ATCC 700601 / ES114) (Vibrio fischeri) protein is Enolase.